Here is a 156-residue protein sequence, read N- to C-terminus: Protein FAM162A (156 aa).

Positions 37-57 (TNGFCSKPQESPKPPDQHTYS) are disordered. Residues 78–104 (RFKKEDEIPETVSFEMLDAAKNKVRVK) are required for proapoptotic activity. A helical transmembrane segment spans residues 105–122 (ISYVMIALTVAGCVLMVI).

It belongs to the UPF0389 family. As to quaternary structure, interacts with HSP90AB1; HSP90AB1 is essential for FAM162A mitochondrial localization and pro-apoptotic activity. Interacts with VDAC2; the interaction is probably involved in inducing mitochondrial permeability transition.

Its subcellular location is the mitochondrion membrane. Proposed to be involved in regulation of apoptosis; the exact mechanism may differ between cell types/tissues. May be involved in hypoxia-induced cell death of transformed cells implicating cytochrome C release and caspase activation (such as CASP9) and inducing mitochondrial permeability transition. May be involved in hypoxia-induced cell death of neuronal cells probably by promoting release of AIFM1 from mitochondria to cytoplasm and its translocation to the nucleus; however, the involvement of caspases has been reported conflictingly. This is Protein FAM162A (FAM162A) from Bos taurus (Bovine).